The sequence spans 432 residues: uncharacterized protein (432 aa).

Helical transmembrane passes span 35–55 (VARV…VIYL), 60–80 (LPPA…IATG), 112–132 (VAGM…PLWS), 144–164 (VGLL…LGAL), 185–205 (LAVA…LWAA), 209–229 (AVAW…ASLL), 242–262 (AHSI…PVLL), 274–294 (GAVI…LSAM), 313–333 (LIAP…AAGL), 359–379 (AAAV…AAAL), 384–404 (LLGW…PMPL), and 408–428 (TVIA…AALA).

It to M.tuberculosis Rv3630 and M.bovis Mb3654.

The protein localises to the cell membrane. This is an uncharacterized protein from Mycobacterium tuberculosis (strain CDC 1551 / Oshkosh).